A 1495-amino-acid polypeptide reads, in one-letter code: Pregnancy zone protein (1495 aa).

Positions 1–24 (MRRNQLPTPAFLLLFLLLPRDATT) are cleaved as a signal peptide. Cys-48 and Cys-86 are joined by a disulfide. N-linked (GlcNAc...) asparagine glycans are attached at residues Asn-55 and Asn-157. 2 cysteine pairs are disulfide-bonded: Cys-249-Cys-298 and Cys-267-Cys-286. Residues Asn-382, Asn-405, and Asn-412 are each glycosylated (N-linked (GlcNAc...) asparagine). An intrachain disulfide couples Cys-469 to Cys-562. An N-linked (GlcNAc...) asparagine glycan is attached at Asn-568. 6 disulfide bridges follow: Cys-594–Cys-783, Cys-642–Cys-689, Cys-833–Cys-861, Cys-859–Cys-895, Cys-933–Cys-1339, and Cys-1092–Cys-1140. The interval 686-744 (PRFCQEFQHYPAMGGVAPQALAVAASGPGSSFRAMGVPMMGLDYSDEINQVVEVRETVR) is bait region. 2 N-linked (GlcNAc...) asparagine glycosylation sites follow: Asn-881 and Asn-942. A cross-link (isoglutamyl cysteine thioester (Cys-Gln)) is located at residues 984-987 (CGEQ). An N-linked (GlcNAc...) asparagine glycan is attached at Asn-1003. N-linked (GlcNAc...) asparagine glycosylation is found at Asn-1385 and Asn-1443.

Belongs to the protease inhibitor I39 (alpha-2-macroglobulin) family. In terms of tissue distribution, highest expression in liver, medium expression in ovary, heart and stomach. Low expression in lung, kidney and uterus. Protein found in plasma.

The protein localises to the secreted. Functionally, is able to inhibit all four classes of proteinases by a unique 'trapping' mechanism. This protein has a peptide stretch, called the 'bait region' which contains specific cleavage sites for different proteinases. When a proteinase cleaves the bait region, a conformational change is induced in the protein which traps the proteinase. The entrapped enzyme remains active against low molecular weight substrates (activity against high molecular weight substrates is greatly reduced). Following cleavage in the bait region, a thioester bond is hydrolyzed and mediates the covalent binding of the protein to the proteinase. This chain is Pregnancy zone protein (Pzp), found in Mus musculus (Mouse).